Consider the following 247-residue polypeptide: ATP synthase subunit a, chloroplastic (247 aa).

The next 5 helical transmembrane spans lie at 38 to 58 (QVLITSWVVIAILLGSAAIAV), 95 to 115 (VPFIGTMFLFIFVSNWSGALL), 134 to 154 (INTTVALALPTSVAYFYAGLT), 199 to 219 (LVVVVLVSLVPSVVPIPVMFL), and 220 to 240 (GLFTSSIQALIFATLAAAYIG).

Belongs to the ATPase A chain family. As to quaternary structure, F-type ATPases have 2 components, CF(1) - the catalytic core - and CF(0) - the membrane proton channel. CF(1) has five subunits: alpha(3), beta(3), gamma(1), delta(1), epsilon(1). CF(0) has four main subunits: a, b, b' and c.

The protein resides in the plastid. Its subcellular location is the chloroplast thylakoid membrane. Functionally, key component of the proton channel; it plays a direct role in the translocation of protons across the membrane. This Illicium oligandrum (Star anise) protein is ATP synthase subunit a, chloroplastic.